The sequence spans 378 residues: Anhydro-N-acetylmuramic acid kinase (378 aa).

Residue G9–D16 coordinates ATP.

This sequence belongs to the anhydro-N-acetylmuramic acid kinase family.

It catalyses the reaction 1,6-anhydro-N-acetyl-beta-muramate + ATP + H2O = N-acetyl-D-muramate 6-phosphate + ADP + H(+). It functions in the pathway amino-sugar metabolism; 1,6-anhydro-N-acetylmuramate degradation. The protein operates within cell wall biogenesis; peptidoglycan recycling. In terms of biological role, catalyzes the specific phosphorylation of 1,6-anhydro-N-acetylmuramic acid (anhMurNAc) with the simultaneous cleavage of the 1,6-anhydro ring, generating MurNAc-6-P. Is required for the utilization of anhMurNAc either imported from the medium or derived from its own cell wall murein, and thus plays a role in cell wall recycling. The sequence is that of Anhydro-N-acetylmuramic acid kinase from Prochlorococcus marinus (strain NATL1A).